A 465-amino-acid polypeptide reads, in one-letter code: Kynureninase (465 aa).

Met-1 carries the post-translational modification N-acetylmethionine. Residues Leu-137, Thr-138, 165–168 (FPSD), Ser-221, Asp-250, His-253, and Tyr-275 contribute to the pyridoxal 5'-phosphate site. Lys-276 bears the N6-(pyridoxal phosphate)lysine mark. 2 residues coordinate pyridoxal 5'-phosphate: Trp-305 and Asn-333.

The protein belongs to the kynureninase family. As to quaternary structure, homodimer. Pyridoxal 5'-phosphate serves as cofactor. As to expression, expressed in all tissues tested (heart, brain placenta, lung, liver, skeletal muscle, kidney and pancreas). Highest levels found in placenta, liver and lung. Expressed in all brain regions.

It is found in the cytoplasm. The protein resides in the cytosol. The enzyme catalyses L-kynurenine + H2O = anthranilate + L-alanine + H(+). The catalysed reaction is 3-hydroxy-L-kynurenine + H2O = 3-hydroxyanthranilate + L-alanine + H(+). It functions in the pathway amino-acid degradation; L-kynurenine degradation; L-alanine and anthranilate from L-kynurenine: step 1/1. Its pathway is cofactor biosynthesis; NAD(+) biosynthesis; quinolinate from L-kynurenine: step 2/3. Its activity is regulated as follows. Inhibited by o-methoxybenzoylalanine (OMBA). Catalyzes the cleavage of L-kynurenine (L-Kyn) and L-3-hydroxykynurenine (L-3OHKyn) into anthranilic acid (AA) and 3-hydroxyanthranilic acid (3-OHAA), respectively. Has a preference for the L-3-hydroxy form. Also has cysteine-conjugate-beta-lyase activity. The protein is Kynureninase of Homo sapiens (Human).